Here is a 1049-residue protein sequence, read N- to C-terminus: Nonsense-mediated mRNA decay protein 2 (1049 aa).

Residues 41–282 (LKKNTAFMKR…SLNSYVDKLE (242 aa)) form the MIF4G 1 domain. Tyr60 carries the post-translational modification Phosphotyrosine. Positions 412–421 (SQEGIRSSSE) are enriched in polar residues. The segment at 412-438 (SQEGIRSSSENNKKEDDLKDSTGDLNT) is disordered. Residues 422 to 433 (NNKKEDDLKDST) show a composition bias toward basic and acidic residues. MIF4G domains follow at residues 446–634 (DNFL…VNPP) and 649–855 (EFLY…VRPS). The segment at 909-934 (DISDESETDEESSGLEESDLLDSEDE) is disordered.

It is found in the cytoplasm. Involved in nonsense-mediated decay of mRNAs containing premature stop codons. It interacts, via its C-terminus, with NAM7/UPF1. Could be involved in determining the efficiency of translational termination or reinitiation or factors involved in the initial assembly of an initiation- and termination-competent mRNP. The polypeptide is Nonsense-mediated mRNA decay protein 2 (upf2) (Schizosaccharomyces pombe (strain 972 / ATCC 24843) (Fission yeast)).